A 546-amino-acid polypeptide reads, in one-letter code: 2-isopropylmalate synthase (546 aa).

The Pyruvate carboxyltransferase domain maps to Ile8 to Ser271. Mn(2+)-binding residues include Asp17, His208, His210, and Asn244. Residues Gln408–Asn546 are regulatory domain.

Belongs to the alpha-IPM synthase/homocitrate synthase family. LeuA type 1 subfamily. In terms of assembly, homodimer. It depends on Mn(2+) as a cofactor.

The protein resides in the cytoplasm. The enzyme catalyses 3-methyl-2-oxobutanoate + acetyl-CoA + H2O = (2S)-2-isopropylmalate + CoA + H(+). It participates in amino-acid biosynthesis; L-leucine biosynthesis; L-leucine from 3-methyl-2-oxobutanoate: step 1/4. Its function is as follows. Catalyzes the condensation of the acetyl group of acetyl-CoA with 3-methyl-2-oxobutanoate (2-ketoisovalerate) to form 3-carboxy-3-hydroxy-4-methylpentanoate (2-isopropylmalate). This chain is 2-isopropylmalate synthase, found in Prochlorococcus marinus (strain AS9601).